Here is a 68-residue protein sequence, read N- to C-terminus: Protein SlyX homolog (68 aa).

It belongs to the SlyX family.

The polypeptide is Protein SlyX homolog (Brucella melitensis biotype 1 (strain ATCC 23456 / CCUG 17765 / NCTC 10094 / 16M)).